We begin with the raw amino-acid sequence, 466 residues long: Nitric oxide reductase subunit B (466 aa).

The chain crosses the membrane as a helical span at residues tyrosine 19 to leucine 39. Histidine 60 contributes to the heme b binding site. The next 8 helical transmembrane spans lie at threonine 61–proline 81, tryptophan 95–valine 115, isoleucine 142–valine 162, alanine 169–phenylalanine 189, valine 205–valine 225, valine 243–isoleucine 263, leucine 270–phenylalanine 290, and valine 308–phenylalanine 328. Positions 207, 258, and 259 each coordinate Fe cation. Heme b contacts are provided by histidine 348 and histidine 350. 3 consecutive transmembrane segments (helical) span residues glycine 349–methionine 369, phenylalanine 391–leucine 411, and leucine 434–alanine 454.

Belongs to the heme-copper respiratory oxidase family. Heterodimer of cytochromes b (large subunit) and c (small subunit).

The protein localises to the cell membrane. The catalysed reaction is nitrous oxide + 2 Fe(III)-[cytochrome c] + H2O = 2 nitric oxide + 2 Fe(II)-[cytochrome c] + 2 H(+). It participates in nitrogen metabolism; nitrate reduction (denitrification); dinitrogen from nitrate: step 3/4. In terms of biological role, component of the anaerobic respiratory chain that transforms nitrate to dinitrogen (denitrification). NorB is the catalytic subunit of the enzyme complex. Shows proton pump activity across the membrane in denitrifying bacterial cells. The mononitrogen reduction is probably coupled to electron transport phosphorylation. This is Nitric oxide reductase subunit B (norB) from Pseudomonas aeruginosa (strain ATCC 15692 / DSM 22644 / CIP 104116 / JCM 14847 / LMG 12228 / 1C / PRS 101 / PAO1).